The primary structure comprises 308 residues: HTH-type transcriptional regulator SsuR (308 aa).

One can recognise an HTH lysR-type domain in the interval 1-59; that stretch reads MNFQQLRFVREAVRQNMNLTEVANVLYTSQSGVSKQIKDLEDELGVDIFIRRGKRLTGL. Residues 19–38 constitute a DNA-binding region (H-T-H motif); sequence LTEVANVLYTSQSGVSKQIK.

The protein belongs to the LysR transcriptional regulatory family.

Transcriptional regulator that is essential for the utilization of a number of organic sulfur sources of either environmental or human origin. Required for aliphatic sulfonate utilization. Binds to DNA at target promoter regions. Targets include the ssuDBC operon, the tauABC operon, three tauD-type genes and atsA. The chain is HTH-type transcriptional regulator SsuR from Burkholderia cenocepacia (strain ATCC BAA-245 / DSM 16553 / LMG 16656 / NCTC 13227 / J2315 / CF5610) (Burkholderia cepacia (strain J2315)).